Here is a 102-residue protein sequence, read N- to C-terminus: Putative pterin-4-alpha-carbinolamine dehydratase (102 aa).

The protein belongs to the pterin-4-alpha-carbinolamine dehydratase family.

The enzyme catalyses (4aS,6R)-4a-hydroxy-L-erythro-5,6,7,8-tetrahydrobiopterin = (6R)-L-erythro-6,7-dihydrobiopterin + H2O. This chain is Putative pterin-4-alpha-carbinolamine dehydratase, found in Burkholderia ambifaria (strain MC40-6).